The primary structure comprises 882 residues: MIHVLKSRSTLLTASSIVRTSVGSSSRYSQTRTYSRTHSWSKDASGGAISVLPTKLPFGEQAPRFPHTLGLPLVSRPLFPGLVTSVTLTDEATIDAMEALTKNQDQAYVSCFLRKKNPTGVSEGGVILATPEVITDPSDIYHVGTFAQIQRLTRGDETAATLILLAHRRLDLEYVDKIGPPIDVTVKHWNRSDYTGADDTIRALSNEIISTIREVAQVNMLFRENLQYFPMRVDANDPFRLADFAASISASGTPEDLQAVLEEKDAEMRLHKALVLLNREREVSKLQQEISQKVEERMTEAQRKYFLTEQLKSIKKELGMERDDKDTLIEKYRKTLSEYPHVPEEAMETIDAELEKFSTLEKNSPEYNVTRSYLDWLTSVPWGVETEENFDIQKARKTLDRDHYGLDDVKDTILEFIAIGKLRGSVQGKILCLSGPPGTGKTSIAKSVADALGRQFFRFSVGGLSDVSEIKGHRRTYIGAMPGKLIQCLKATGTTNPVVLIDEIDKLGTGFRGDPASALLEVLDPGQNSTFRDYFLDVPVDISKVLFICTANELERIPGPLLDRMEVIRLSGYDLPEKVAIAEQYLVPKSMRDSGLLGVPETLKLTIDAVRSLARWYAREAGVRNLAKYIDRITRKLALQVVAESEGATLTDKSSRKSNTWEITEDNLHEYVGKPVFTSDRLYEDGPLPHGIVMGLAYTSMGGSALYIETQSIRRGLDSEGKTRGGGTLKVTGQLGDVMKESTQIASTVARARLSDIKPESNFFDINDIHMHVPEGATPKDGPSAGVTMVTSMLSLALDRPIRNDLAMTGEVSLTGKVLAVGGIKEKIMGARRAGIKCVILPAANKRDYDEIPDYLKEDLEVHYADTFDKVYEVAFSSVDST.

The N-terminal 34 residues, 1-34, are a transit peptide targeting the mitochondrion; sequence MIHVLKSRSTLLTASSIVRTSVGSSSRYSQTRTY. The Lon N-terminal domain occupies 68–281; it reads TLGLPLVSRP…KALVLLNRER (214 aa). Position 435–442 (435–442) interacts with ATP; the sequence is GPPGTGKT. The 192-residue stretch at 687–878 folds into the Lon proteolytic domain; sequence PLPHGIVMGL…DKVYEVAFSS (192 aa). Residues S784 and K827 contribute to the active site.

It belongs to the peptidase S16 family. Homohexamer or homoheptamer. Organized in a ring with a central cavity.

The protein localises to the mitochondrion matrix. The catalysed reaction is Hydrolysis of proteins in presence of ATP.. Functionally, ATP-dependent serine protease that mediates the selective degradation of misfolded, unassembled or oxidatively damaged polypeptides as well as certain short-lived regulatory proteins in the mitochondrial matrix. May also have a chaperone function in the assembly of inner membrane protein complexes. Participates in the regulation of mitochondrial gene expression and in the maintenance of the integrity of the mitochondrial genome. Binds to mitochondrial DNA in a site-specific manner. This Phaeodactylum tricornutum (strain CCAP 1055/1) protein is Lon protease homolog, mitochondrial.